The chain runs to 66 residues: Large ribosomal subunit protein bL32 (66 aa).

The disordered stretch occupies residues 1–20 (MAVPKRRKSKSKVRTKRAHH).

This sequence belongs to the bacterial ribosomal protein bL32 family.

The polypeptide is Large ribosomal subunit protein bL32 (Leptospira borgpetersenii serovar Hardjo-bovis (strain JB197)).